The following is a 473-amino-acid chain: Cell division protein FtsP (473 aa).

The tat-type signal signal peptide spans 1 to 27 (MSLSRRQFIQASGLAMCLGALPFAVQA).

This sequence belongs to the FtsP family. In terms of processing, predicted to be exported by the Tat system. The position of the signal peptide cleavage has not been experimentally proven.

It localises to the periplasm. Functionally, cell division protein that is required for growth during stress conditions. May be involved in protecting or stabilizing the divisomal assembly under conditions of stress. The sequence is that of Cell division protein FtsP from Xenorhabdus nematophila (strain ATCC 19061 / DSM 3370 / CCUG 14189 / LMG 1036 / NCIMB 9965 / AN6).